Reading from the N-terminus, the 184-residue chain is Shikimate kinase (184 aa).

12-17 provides a ligand contact to ATP; that stretch reads GSGKST. S16 serves as a coordination point for Mg(2+). Substrate contacts are provided by D34, R58, and G80. ATP is bound at residue R117. R136 is a substrate binding site. ATP is bound at residue R153. Residues 164–184 are disordered; the sequence is SRLDDPTPNTSPSSTASGAAT. Over residues 169–184 the composition is skewed to low complexity; that stretch reads PTPNTSPSSTASGAAT.

Belongs to the shikimate kinase family. As to quaternary structure, monomer. Mg(2+) is required as a cofactor.

The protein resides in the cytoplasm. It carries out the reaction shikimate + ATP = 3-phosphoshikimate + ADP + H(+). Its pathway is metabolic intermediate biosynthesis; chorismate biosynthesis; chorismate from D-erythrose 4-phosphate and phosphoenolpyruvate: step 5/7. In terms of biological role, catalyzes the specific phosphorylation of the 3-hydroxyl group of shikimic acid using ATP as a cosubstrate. The chain is Shikimate kinase from Mycobacterium ulcerans (strain Agy99).